Consider the following 206-residue polypeptide: Small ribosomal subunit protein uS4 (206 aa).

One can recognise an S4 RNA-binding domain in the interval glycine 96–lysine 156.

The protein belongs to the universal ribosomal protein uS4 family. In terms of assembly, part of the 30S ribosomal subunit. Contacts protein S5. The interaction surface between S4 and S5 is involved in control of translational fidelity.

Functionally, one of the primary rRNA binding proteins, it binds directly to 16S rRNA where it nucleates assembly of the body of the 30S subunit. Its function is as follows. With S5 and S12 plays an important role in translational accuracy. This Salmonella typhi protein is Small ribosomal subunit protein uS4.